Here is a 271-residue protein sequence, read N- to C-terminus: Large ribosomal subunit protein uL2cz/uL2cy (271 aa).

Disordered stretches follow at residues 1-22 (MAKH…DRQV) and 223-271 (PVDH…RRRK).

It belongs to the universal ribosomal protein uL2 family. In terms of assembly, part of the 50S ribosomal subunit.

It localises to the plastid. The protein localises to the chloroplast. The sequence is that of Large ribosomal subunit protein uL2cz/uL2cy (rpl2-A) from Sorghum bicolor (Sorghum).